The following is a 263-amino-acid chain: PDZ domain-containing protein 9 (263 aa).

The PDZ domain occupies 30–109 (QTKLTVGSMG…GTILQIKVYR (80 aa)).

The protein is PDZ domain-containing protein 9 (PDZD9) of Bos taurus (Bovine).